The sequence spans 250 residues: Putative (5-formylfuran-3-yl)methyl phosphate synthase (250 aa).

Lys29 serves as the catalytic Schiff-base intermediate with substrate. Lys87 acts as the Proton acceptor in catalysis.

It belongs to the MfnB family.

The enzyme catalyses 2 D-glyceraldehyde 3-phosphate = 4-(hydroxymethyl)-2-furancarboxaldehyde phosphate + phosphate + 2 H2O. Its function is as follows. Catalyzes the formation of 4-(hydroxymethyl)-2-furancarboxaldehyde phosphate (4-HFC-P) from two molecules of glyceraldehyde-3-P (GA-3-P). This chain is Putative (5-formylfuran-3-yl)methyl phosphate synthase, found in Streptomyces griseus subsp. griseus (strain JCM 4626 / CBS 651.72 / NBRC 13350 / KCC S-0626 / ISP 5235).